A 315-amino-acid chain; its full sequence is Protein SHORT INTERNODES 1 (315 aa).

A compositionally biased stretch (gly residues) spans 1–10 (MAGFPLGGGS). Disordered stretches follow at residues 1 to 24 (MAGF…PPVH) and 64 to 92 (PPAP…GGGG). Residues 70–82 (AGASSSSSSRGMR) show a composition bias toward low complexity. Over residues 83 to 92 (SSGGGGGGGG) the composition is skewed to gly residues. 6 residues coordinate Zn(2+): cysteine 97, cysteine 100, cysteine 108, cysteine 113, cysteine 117, and cysteine 124. The segment at residues 97–124 (CQDCGNQAKKDCTHMRCRTCCKSRGFAC) is a DNA-binding region (zn(2)-C6 fungal-type; degenerate). Composition is skewed to low complexity over residues 143–156 (QQLA…AATA) and 172–182 (RPSATTPTTSS). Residues 143-186 (QQLAALAASAAATAGGAGPSRDPTKRPRARPSATTPTTSSGDQQ) are disordered. Residues 227-230 (IGGH) carry the Required for homo- and heterodimerization motif.

The protein belongs to the SHI protein family. As to quaternary structure, forms homodimers (via C-terminus). Interacts with SPL14/IPA1 (via C-terminus). In terms of tissue distribution, predominantly expressed in axillary buds and young panicles.

The protein localises to the nucleus. Its function is as follows. Regulates tillering and panicle branching by modulating SPL14/IPA1 transcriptional activity on the downstream TB1 and DEP1 target genes. Binds directly to the 5'-T/GCTCTAC-3' DNA motif found in the promoter regions of both TB1 and DEP1. Represses the DNA binding activity of SPL14/IPA1 toward the promoters of both TB1 and DEP1. Exhibits weak transcriptional activation activity in yeast cells. This Oryza sativa subsp. japonica (Rice) protein is Protein SHORT INTERNODES 1.